A 378-amino-acid polypeptide reads, in one-letter code: MTTQFSVAGVELELLRYPAQQESNLQAWDAADEHLLKSLIESEQAAVPTAIINDSFGALSCGVSKLNPSWPLCVETDARTSFLGTEQNHGRNQLPLDNLQWFTSRDTLPENLALVLMKLPKNLSYFAHQLTRLSQVLPAGTRILVAAKAKSINGALLDVFGNHLGPASASLAWKNTRVITCVSDGKPRPLAKEVTWAVPEYQLEISNLSNVFAANKLDIGARIMLENLPKGDFKSIVDLGCGNGVLGLRTAQLFPEADIHFIDDSEMAVASAKANWARNQLPADKGHFYWDDCMTHLPEEVQPDLVLCNPPFHQGEAITDHIAWQMFLDARRRLKDGGILHIVGNRHLAYHVKLQRLFKNCTTVASNGKFVILQAQKK.

Belongs to the methyltransferase superfamily. RlmG family.

The protein localises to the cytoplasm. It catalyses the reaction guanosine(1835) in 23S rRNA + S-adenosyl-L-methionine = N(2)-methylguanosine(1835) in 23S rRNA + S-adenosyl-L-homocysteine + H(+). In terms of biological role, specifically methylates the guanine in position 1835 (m2G1835) of 23S rRNA. The sequence is that of Ribosomal RNA large subunit methyltransferase G from Shewanella baltica (strain OS185).